Here is a 177-residue protein sequence, read N- to C-terminus: Dihydrofolate reductase type 9 (177 aa).

Residues 3–167 enclose the DHFR domain; it reads SLNMIVAVNK…TKLIFQIWIN (165 aa).

This sequence belongs to the dihydrofolate reductase family. Homodimer.

The enzyme catalyses (6S)-5,6,7,8-tetrahydrofolate + NADP(+) = 7,8-dihydrofolate + NADPH + H(+). Its pathway is cofactor biosynthesis; tetrahydrofolate biosynthesis; 5,6,7,8-tetrahydrofolate from 7,8-dihydrofolate: step 1/1. Its function is as follows. Key enzyme in folate metabolism. Catalyzes an essential reaction for de novo glycine and purine synthesis, and for DNA precursor synthesis. This Escherichia coli protein is Dihydrofolate reductase type 9 (dhfrIX).